Here is a 528-residue protein sequence, read N- to C-terminus: Na(+)/H(+) antiporter NhaB (528 aa).

The next 11 membrane-spanning stretches (helical) occupy residues 23 to 45 (FAIL…VAGW), 66 to 86 (PGGL…SQVL), 95 to 115 (VLLL…LLLF), 139 to 159 (AFLS…AVAV), 203 to 223 (LLMH…VGEP), 241 to 261 (LRMS…CFLV), 310 to 330 (LIIG…SVII), 349 to 369 (EEAL…GVII), 390 to 410 (LVIF…VFVG), 448 to 468 (ATPN…APLI), and 476 to 496 (VWMA…AIQF).

The protein belongs to the NhaB Na(+)/H(+) (TC 2.A.34) antiporter family.

The protein resides in the cell inner membrane. The enzyme catalyses 2 Na(+)(in) + 3 H(+)(out) = 2 Na(+)(out) + 3 H(+)(in). In terms of biological role, na(+)/H(+) antiporter that extrudes sodium in exchange for external protons. The protein is Na(+)/H(+) antiporter NhaB of Shewanella piezotolerans (strain WP3 / JCM 13877).